A 349-amino-acid chain; its full sequence is Anthranilate phosphoribosyltransferase (349 aa).

5-phospho-alpha-D-ribose 1-diphosphate-binding positions include glycine 82, 85–86 (GD), 92–95 (NVST), 110–118 (KHGNRAVSG), and serine 122. Glycine 82 is an anthranilate binding site. Serine 94 lines the Mg(2+) pocket. Asparagine 113 contacts anthranilate. Arginine 168 provides a ligand contact to anthranilate. Mg(2+) is bound by residues aspartate 227 and glutamate 228.

It belongs to the anthranilate phosphoribosyltransferase family. Homodimer. Requires Mg(2+) as cofactor.

It carries out the reaction N-(5-phospho-beta-D-ribosyl)anthranilate + diphosphate = 5-phospho-alpha-D-ribose 1-diphosphate + anthranilate. It participates in amino-acid biosynthesis; L-tryptophan biosynthesis; L-tryptophan from chorismate: step 2/5. Functionally, catalyzes the transfer of the phosphoribosyl group of 5-phosphorylribose-1-pyrophosphate (PRPP) to anthranilate to yield N-(5'-phosphoribosyl)-anthranilate (PRA). The polypeptide is Anthranilate phosphoribosyltransferase (Pseudomonas putida (strain ATCC 47054 / DSM 6125 / CFBP 8728 / NCIMB 11950 / KT2440)).